Here is a 250-residue protein sequence, read N- to C-terminus: tRNA (guanine-N(1)-)-methyltransferase (250 aa).

Residues Gly-116 and 136 to 141 (IGDYVL) each bind S-adenosyl-L-methionine.

This sequence belongs to the RNA methyltransferase TrmD family. In terms of assembly, homodimer.

It localises to the cytoplasm. It catalyses the reaction guanosine(37) in tRNA + S-adenosyl-L-methionine = N(1)-methylguanosine(37) in tRNA + S-adenosyl-L-homocysteine + H(+). Functionally, specifically methylates guanosine-37 in various tRNAs. In Pseudomonas savastanoi pv. phaseolicola (strain 1448A / Race 6) (Pseudomonas syringae pv. phaseolicola (strain 1448A / Race 6)), this protein is tRNA (guanine-N(1)-)-methyltransferase.